A 340-amino-acid chain; its full sequence is NAD kinase (340 aa).

D66 acts as the Proton acceptor in catalysis. NAD(+) is bound by residues 66–67 (DG), R71, 141–142 (ND), K152, D171, 182–187 (TAYAFS), and A206. Residues 321–340 (AGVAGTEPDKPGERDGKAGS) form a disordered region. Basic and acidic residues predominate over residues 327–340 (EPDKPGERDGKAGS).

It belongs to the NAD kinase family. Requires a divalent metal cation as cofactor.

Its subcellular location is the cytoplasm. The catalysed reaction is NAD(+) + ATP = ADP + NADP(+) + H(+). Functionally, involved in the regulation of the intracellular balance of NAD and NADP, and is a key enzyme in the biosynthesis of NADP. Catalyzes specifically the phosphorylation on 2'-hydroxyl of the adenosine moiety of NAD to yield NADP. The polypeptide is NAD kinase (Bifidobacterium longum (strain DJO10A)).